The primary structure comprises 1272 residues: CST complex subunit CTC1 (1272 aa).

It belongs to the CTC1 family. In terms of assembly, component of the CST complex, composed of CTC1, TEN1 and STN1. Interacts with POT1A.

The protein resides in the nucleus. It is found in the chromosome. Its subcellular location is the telomere. Functionally, component of the CST complex, a complex that binds to single-stranded DNA and is required to protect telomeres from DNA degradation. The CST complex binds single-stranded DNA with high affinity in a sequence-independent manner, while isolated subunits bind DNA with low affinity by themselves. Associates with enzymatically active telomerase. This is CST complex subunit CTC1 from Arabidopsis thaliana (Mouse-ear cress).